The sequence spans 277 residues: NAD kinase (277 aa).

The active-site Proton acceptor is aspartate 67. NAD(+)-binding positions include 67 to 68, arginine 72, 137 to 138, lysine 148, arginine 165, aspartate 167, 178 to 183, leucine 202, and glutamine 236; these read DG, NE, and TGYAMS.

The protein belongs to the NAD kinase family. A divalent metal cation serves as cofactor.

It is found in the cytoplasm. It carries out the reaction NAD(+) + ATP = ADP + NADP(+) + H(+). Functionally, involved in the regulation of the intracellular balance of NAD and NADP, and is a key enzyme in the biosynthesis of NADP. Catalyzes specifically the phosphorylation on 2'-hydroxyl of the adenosine moiety of NAD to yield NADP. The sequence is that of NAD kinase from Pyrococcus abyssi (strain GE5 / Orsay).